Reading from the N-terminus, the 202-residue chain is Peptide methionine sulfoxide reductase A1 (202 aa).

Residues 1-20 (MNILNKLGIGSSRQTNMDPS) are disordered. Phosphoserine is present on Ser-189.

This sequence belongs to the MsrA Met sulfoxide reductase family.

It is found in the cytoplasm. The protein resides in the cytosol. The catalysed reaction is L-methionyl-[protein] + [thioredoxin]-disulfide + H2O = L-methionyl-(S)-S-oxide-[protein] + [thioredoxin]-dithiol. It catalyses the reaction [thioredoxin]-disulfide + L-methionine + H2O = L-methionine (S)-S-oxide + [thioredoxin]-dithiol. In terms of biological role, catalyzes the reduction of methionine sulfoxide (MetSO) to methionine in proteins. Plays a protective role against oxidative stress by restoring activity to proteins that have been inactivated by methionine oxidation. MSRA family specifically reduces the MetSO S-enantiomer. The chain is Peptide methionine sulfoxide reductase A1 (MSRA1) from Arabidopsis thaliana (Mouse-ear cress).